Here is a 194-residue protein sequence, read N- to C-terminus: Putative 3-methyladenine DNA glycosylase (194 aa).

The protein belongs to the DNA glycosylase MPG family.

This is Putative 3-methyladenine DNA glycosylase from Chlamydia felis (strain Fe/C-56) (Chlamydophila felis).